Consider the following 317-residue polypeptide: Homoserine O-acetyltransferase (317 aa).

The Acyl-thioester intermediate role is filled by Cys142. Substrate contacts are provided by Lys163 and Ser192. The active-site Proton acceptor is the His235. Glu237 is an active-site residue. Arg249 is a binding site for substrate.

The protein belongs to the MetA family.

It is found in the cytoplasm. It catalyses the reaction L-homoserine + acetyl-CoA = O-acetyl-L-homoserine + CoA. The protein operates within amino-acid biosynthesis; L-methionine biosynthesis via de novo pathway; O-acetyl-L-homoserine from L-homoserine: step 1/1. Functionally, transfers an acetyl group from acetyl-CoA to L-homoserine, forming acetyl-L-homoserine. This Rhizorhabdus wittichii (strain DSM 6014 / CCUG 31198 / JCM 15750 / NBRC 105917 / EY 4224 / RW1) (Sphingomonas wittichii) protein is Homoserine O-acetyltransferase.